A 283-amino-acid polypeptide reads, in one-letter code: Quinate/shikimate dehydrogenase (NAD(+)) (283 aa).

S17, T69, K73, N94, and D110 together coordinate shikimate. L-quinate-binding positions include 17–19, T69, K73, N94, and D110; that span reads SRT. Catalysis depends on K73, which acts as the Proton acceptor. Residues 137 to 138, D158, R163, 203 to 206, A213, V228, and G251 contribute to the NAD(+) site; these read GV and PMGM. Q258 contacts shikimate. Residue Q258 coordinates L-quinate.

Belongs to the shikimate dehydrogenase family. In terms of assembly, homodimer.

It catalyses the reaction L-quinate + NAD(+) = 3-dehydroquinate + NADH + H(+). The enzyme catalyses shikimate + NAD(+) = 3-dehydroshikimate + NADH + H(+). It participates in metabolic intermediate biosynthesis; chorismate biosynthesis; chorismate from D-erythrose 4-phosphate and phosphoenolpyruvate: step 4/7. Its pathway is aromatic compound metabolism; 3,4-dihydroxybenzoate biosynthesis; 3-dehydroquinate from D-quinate (NAD(+) route). Functionally, involved in the biosynthesis of the chorismate, which leads to the biosynthesis of aromatic amino acids, and plays a key role in the quinate degradation pathway. Catalyzes the NAD(+)-dependent oxidation of both quinate and shikimate to 3-dehydroquinate and 3-dehydroshikimate, respectively. It can only use NAD. The chain is Quinate/shikimate dehydrogenase (NAD(+)) from Corynebacterium glutamicum (strain ATCC 13032 / DSM 20300 / JCM 1318 / BCRC 11384 / CCUG 27702 / LMG 3730 / NBRC 12168 / NCIMB 10025 / NRRL B-2784 / 534).